Reading from the N-terminus, the 134-residue chain is Iron-sulfur cluster insertion protein ErpA (134 aa).

3 residues coordinate iron-sulfur cluster: C47, C126, and C128.

The protein belongs to the HesB/IscA family. Homodimer. The cofactor is iron-sulfur cluster.

Its function is as follows. Required for insertion of 4Fe-4S clusters for at least IspG. This chain is Iron-sulfur cluster insertion protein ErpA, found in Coxiella burnetii (strain Dugway 5J108-111).